Here is a 37-residue protein sequence, read N- to C-terminus: Omega-conotoxin-like S6.7 (37 aa).

The propeptide occupies 1 to 4 (KSTS). 3 disulfide bridges follow: cysteine 5–cysteine 20, cysteine 12–cysteine 23, and cysteine 19–cysteine 32.

It belongs to the conotoxin O1 superfamily. Expressed by the venom duct.

The protein resides in the secreted. Functionally, omega-conotoxins act at presynaptic membranes, they bind and block voltage-gated calcium channels (Cav). This toxin blocks N-, P- and Q-type calcium channels. The protein is Omega-conotoxin-like S6.7 of Conus striatus (Striated cone).